A 986-amino-acid polypeptide reads, in one-letter code: Zinc finger protein 445 (986 aa).

Positions 52–134 (RQLFRQLRYH…ALLEELQRDL (83 aa)) constitute an SCAN box domain. Residues 219–289 (LTFQDVEVTF…NICTVQLKRD (71 aa)) enclose the KRAB domain. Residues Lys302, Lys360, and Lys385 each participate in a glycyl lysine isopeptide (Lys-Gly) (interchain with G-Cter in SUMO2) cross-link. The tract at residues 433–460 (QNTGLKENGKDRYGETSRKSWHAHPEHR) is disordered. Basic and acidic residues predominate over residues 439 to 460 (ENGKDRYGETSRKSWHAHPEHR). 2 consecutive C2H2-type zinc fingers follow at residues 470-492 (FQCRVCGKAFKWRSNRIRHEKIH) and 498-520 (YQCSLCEKAFQRLSSYRLHQKTH). Residue Lys524 forms a Glycyl lysine isopeptide (Lys-Gly) (interchain with G-Cter in SUMO2) linkage. 2 C2H2-type zinc fingers span residues 553–575 (LHCNQCGKNFSCKSYAIEHQRIH) and 581–604 (YKCTRCRKTFRWKSNFSRHMKLHH). Lys609 participates in a covalent cross-link: Glycyl lysine isopeptide (Lys-Gly) (interchain with G-Cter in SUMO2). 2 C2H2-type zinc fingers span residues 634–656 (FPCQNCGKTFTQKKSLIEHQRIH) and 662–686 (YQCSGCGETFTYRSSYIIHMKRTQH). Lys691 participates in a covalent cross-link: Glycyl lysine isopeptide (Lys-Gly) (interchain with G-Cter in SUMO2). C2H2-type zinc fingers lie at residues 718–740 (NKCKYCGKAFHNRSFLLIHERVH), 746–768 (YQCRECEKAFRWSSNLYRHQRKH), 796–818 (FWCQECGKTFTRKRSLLDHKGIH), and 824–846 (FKCNLCEKSFDRNYRLVNHQRIH). Residue Lys929 forms a Glycyl lysine isopeptide (Lys-Gly) (interchain with G-Cter in SUMO2) linkage. 2 C2H2-type zinc fingers span residues 933–955 (HKCSTCGKTFKKHSHLISHKRCH) and 961–983 (FKCIVCGKTFRWSSNLTRHMKNH).

This sequence belongs to the krueppel C2H2-type zinc-finger protein family.

The protein resides in the nucleus. Transcription regulator required to maintain maternal and paternal gene imprinting, a process by which gene expression is restricted in a parent of origin-specific manner by epigenetic modification of genomic DNA and chromatin, including DNA methylation. Acts by controlling DNA methylation during the earliest multicellular stages of development at multiple imprinting control regions (ICRs). Acts together with ZFP57, but ZFP57 plays the predominant role in imprinting maintenance. In contrast, ZNF445 seems to be the major factor in human early embryonic imprinting maintenance. This chain is Zinc finger protein 445 (Znf445), found in Mus musculus (Mouse).